The primary structure comprises 194 residues: Oligoribonuclease (194 aa).

In terms of domain architecture, Exonuclease spans 11-174; sequence LIWIDLEMTG…SDVRDSIDEL (164 aa). The active site involves Tyr-132.

It belongs to the oligoribonuclease family.

The protein resides in the cytoplasm. 3'-to-5' exoribonuclease specific for small oligoribonucleotides. In Xanthomonas campestris pv. campestris (strain ATCC 33913 / DSM 3586 / NCPPB 528 / LMG 568 / P 25), this protein is Oligoribonuclease.